Consider the following 247-residue polypeptide: 5-oxoprolinase subunit A (247 aa).

Belongs to the LamB/PxpA family. In terms of assembly, forms a complex composed of PxpA, PxpB and PxpC.

The enzyme catalyses 5-oxo-L-proline + ATP + 2 H2O = L-glutamate + ADP + phosphate + H(+). Its function is as follows. Catalyzes the cleavage of 5-oxoproline to form L-glutamate coupled to the hydrolysis of ATP to ADP and inorganic phosphate. The sequence is that of 5-oxoprolinase subunit A from Histophilus somni (strain 129Pt) (Haemophilus somnus).